The sequence spans 346 residues: tRNA N6-adenosine threonylcarbamoyltransferase (346 aa).

Fe cation-binding residues include His110 and His114. Residues 132–136 (LLSGG), Asp165, Gly178, and Asn274 contribute to the substrate site. Residue Asp298 participates in Fe cation binding.

The protein belongs to the KAE1 / TsaD family. Requires Fe(2+) as cofactor.

The protein resides in the cytoplasm. The enzyme catalyses L-threonylcarbamoyladenylate + adenosine(37) in tRNA = N(6)-L-threonylcarbamoyladenosine(37) in tRNA + AMP + H(+). Functionally, required for the formation of a threonylcarbamoyl group on adenosine at position 37 (t(6)A37) in tRNAs that read codons beginning with adenine. Is involved in the transfer of the threonylcarbamoyl moiety of threonylcarbamoyl-AMP (TC-AMP) to the N6 group of A37, together with TsaE and TsaB. TsaD likely plays a direct catalytic role in this reaction. In Borreliella afzelii (strain PKo) (Borrelia afzelii), this protein is tRNA N6-adenosine threonylcarbamoyltransferase.